We begin with the raw amino-acid sequence, 120 residues long: MMNGRPGHEPLKFLPDEARSLPPPKLNDPRLVYMGLLGYCTGLMDNMLRMRPVMRAGLHRQLLFVTSFVFAGYFYLKRQNYLYAVKDHDMFGYIKLHPEDFPEKEKKTYAEILEPFHPVR.

The chain crosses the membrane as a helical span at residues 57–76 (GLHRQLLFVTSFVFAGYFYL).

Belongs to the complex I NDUFC2 subunit family. In terms of assembly, complex I is composed of 45 different subunits. Interacts with TMEM242.

It is found in the mitochondrion inner membrane. Its function is as follows. Accessory subunit of the mitochondrial membrane respiratory chain NADH dehydrogenase (Complex I), that is believed not to be involved in catalysis but required for the complex assembly. Complex I functions in the transfer of electrons from NADH to the respiratory chain. The immediate electron acceptor for the enzyme is believed to be ubiquinone. The sequence is that of NADH dehydrogenase [ubiquinone] 1 subunit C2 from Mus musculus (Mouse).